Reading from the N-terminus, the 722-residue chain is Mesentericin-Y105 transport/processing ATP-binding protein MesD (722 aa).

A Peptidase C39 domain is found at glutamine 16 to isoleucine 143. Cysteine 22 is an active-site residue. Helical transmembrane passes span leucine 171–serine 191, leucine 210–alanine 230, leucine 242–phenylalanine 262, threonine 287–valine 307, threonine 311–methionine 331, serine 401–threonine 421, leucine 429–leucine 449, and isoleucine 518–phenylalanine 538. The region spanning valine 173–glutamine 455 is the ABC transmembrane type-1 domain. In terms of domain architecture, ABC transporter spans leucine 489–histidine 722. Residue glycine 522–serine 529 coordinates ATP.

This sequence belongs to the ABC transporter superfamily.

The protein localises to the cell membrane. Involved in the export process of the bacteriocin mesentericin-Y105. The sequence is that of Mesentericin-Y105 transport/processing ATP-binding protein MesD (mesD) from Leuconostoc mesenteroides.